A 343-amino-acid chain; its full sequence is Dimethyladenosine transferase 1, mitochondrial (343 aa).

The transit peptide at 1-27 (MAASGKLSTWRLPPLPTIREIIKLLRV) directs the protein to the mitochondrion. S-adenosyl-L-methionine-binding residues include leucine 38, glycine 63, glutamate 85, lysine 86, aspartate 111, valine 112, and asparagine 141.

Belongs to the class I-like SAM-binding methyltransferase superfamily. rRNA adenine N(6)-methyltransferase family. KsgA subfamily. In terms of assembly, interacts with mitochondrial RNA polymerase POLRMT. Interacts with TFAM. Bound to the maturing mtSSU until the late stages of assembly.

The protein resides in the mitochondrion. The enzyme catalyses adenosine(N)/adenosine(N+1) in rRNA + 4 S-adenosyl-L-methionine = N(6)-dimethyladenosine(N)/N(6)-dimethyladenosine(N+1) in rRNA + 4 S-adenosyl-L-homocysteine + 4 H(+). S-adenosyl-L-methionine-dependent methyltransferase which specifically dimethylates mitochondrial 12S rRNA at the conserved stem loop. Also required for basal transcription of mitochondrial DNA, probably via its interaction with POLRMT and TFAM. Stimulates transcription independently of the methyltransferase activity. Functionally, mitochondrial methyltransferase which uses S-adenosyl methionine to dimethylate two highly conserved adjacent adenosine residues (A1583 and A1584) within the loop of helix 45 at the 3-prime end of 12S rRNA, thereby regulating the assembly or stability of the small subunit of the mitochondrial ribosome. Also required for basal transcription of mitochondrial DNA, probably via its interaction with POLRMT and TFAM. Stimulates transcription independently of the methyltransferase activity. The protein is Dimethyladenosine transferase 1, mitochondrial (TFB1M) of Pongo abelii (Sumatran orangutan).